Reading from the N-terminus, the 185-residue chain is Ribosome-recycling factor (185 aa).

The protein belongs to the RRF family.

It localises to the cytoplasm. Responsible for the release of ribosomes from messenger RNA at the termination of protein biosynthesis. May increase the efficiency of translation by recycling ribosomes from one round of translation to another. In Lactococcus lactis subsp. lactis (strain IL1403) (Streptococcus lactis), this protein is Ribosome-recycling factor.